A 96-amino-acid chain; its full sequence is Citrate lyase acyl carrier protein (96 aa).

Ser-14 is subject to O-(phosphoribosyl dephospho-coenzyme A)serine.

It belongs to the CitD family. As to quaternary structure, oligomer with a subunit composition of (alpha,beta,gamma)6.

It is found in the cytoplasm. Functionally, covalent carrier of the coenzyme of citrate lyase. This is Citrate lyase acyl carrier protein from Lactiplantibacillus plantarum (strain ATCC BAA-793 / NCIMB 8826 / WCFS1) (Lactobacillus plantarum).